The chain runs to 435 residues: IAA-amino acid hydrolase ILR1-like 5 (435 aa).

The first 25 residues, 1–25 (MSFCKLVSFVLILHLLNSCLISCSS), serve as a signal peptide directing secretion. Residues Cys134, His136, Glu170, His194, and His397 each coordinate Mn(2+). The Prevents secretion from ER motif lies at 432–435 (KDEL).

Belongs to the peptidase M20 family.

The protein localises to the endoplasmic reticulum lumen. Its function is as follows. Hydrolyzes certain amino acid conjugates of the plant growth regulator indole-3-acetic acid (IAA). This is IAA-amino acid hydrolase ILR1-like 5 from Arabidopsis thaliana (Mouse-ear cress).